Here is a 75-residue protein sequence, read N- to C-terminus: Protein P8 (75 aa).

A disordered region spans residues 19–47 (PMGGMPSIASSSSAETGQQTQSGNFTGGG). Residues 26–39 (IASSSSAETGQQTQ) are compositionally biased toward polar residues. Residues 55–72 (NNQLLIVGAVVIGLFLVI) form a helical membrane-spanning segment.

The protein localises to the virion membrane. The polypeptide is Protein P8 (VIII) (Pseudoalteromonas phage PM2 (Bacteriophage PM2)).